The chain runs to 295 residues: uncharacterized protein (295 aa).

Residues 1–26 (MKKYLALAAIVAICALWLTQNSNFEA) form the signal peptide.

This is an uncharacterized protein from Archaeoglobus fulgidus (strain ATCC 49558 / DSM 4304 / JCM 9628 / NBRC 100126 / VC-16).